The sequence spans 99 residues: Beta-defensin 127 (99 aa).

Residues 1-20 (MGLFMIIAILLFQKPTVTEQ) form the signal peptide. Cystine bridges form between C24–C53, C33–C47, and C37–C54. The propeptide occupies 66-99 (ITKPSHPKPATLALTLQDYVTIIENFPSLKTQST).

This sequence belongs to the beta-defensin family.

The protein resides in the secreted. Functionally, has antibacterial activity. In Pan troglodytes (Chimpanzee), this protein is Beta-defensin 127 (DEFB127).